Consider the following 194-residue polypeptide: Thymidine kinase (194 aa).

Residues 15–22 and 88–91 contribute to the ATP site; these read GCMFSGKT and DELH. Glutamate 89 serves as the catalytic Proton acceptor. Residues cysteine 148, cysteine 151, cysteine 186, and cysteine 189 each contribute to the Zn(2+) site.

Belongs to the thymidine kinase family. Homotetramer.

Its subcellular location is the cytoplasm. The catalysed reaction is thymidine + ATP = dTMP + ADP + H(+). In Roseiflexus castenholzii (strain DSM 13941 / HLO8), this protein is Thymidine kinase.